We begin with the raw amino-acid sequence, 259 residues long: Ribosomal RNA small subunit methyltransferase A (259 aa).

6 residues coordinate S-adenosyl-L-methionine: Asn13, Leu15, Gly40, Glu61, Asp85, and Asn103.

It belongs to the class I-like SAM-binding methyltransferase superfamily. rRNA adenine N(6)-methyltransferase family. RsmA subfamily.

It is found in the cytoplasm. The catalysed reaction is adenosine(1518)/adenosine(1519) in 16S rRNA + 4 S-adenosyl-L-methionine = N(6)-dimethyladenosine(1518)/N(6)-dimethyladenosine(1519) in 16S rRNA + 4 S-adenosyl-L-homocysteine + 4 H(+). In terms of biological role, specifically dimethylates two adjacent adenosines (A1518 and A1519) in the loop of a conserved hairpin near the 3'-end of 16S rRNA in the 30S particle. May play a critical role in biogenesis of 30S subunits. The protein is Ribosomal RNA small subunit methyltransferase A of Neisseria gonorrhoeae (strain ATCC 700825 / FA 1090).